A 221-amino-acid chain; its full sequence is Leucine rich adaptor protein 1-like (221 aa).

Met1 is subject to N-acetylmethionine. Residues 1 to 81 (MEDGPLPDLR…SGSPRRSHPS (81 aa)) are disordered. 2 stretches are compositionally biased toward basic and acidic residues: residues 8–21 (DLRD…RKVP) and 28–39 (LRGEEPAPREGA). Residues 48–75 (SCSSSSSCSSFAPSVSSSSSSSPASGSP) are compositionally biased toward low complexity.

The protein is Leucine rich adaptor protein 1-like (Lurap1l) of Rattus norvegicus (Rat).